A 437-amino-acid chain; its full sequence is Serine carboxypeptidase-like 7 (437 aa).

A signal peptide spans 1-25; that stretch reads MANDYVSTVLLLLSLLIFLSQRTDS. 3 cysteine pairs are disulfide-bonded: Cys84–Cys327, Cys248–Cys262, and Cys286–Cys293. Asn105 carries N-linked (GlcNAc...) asparagine glycosylation. The active site involves Ser180. An N-linked (GlcNAc...) asparagine glycan is attached at Asn346. Residue Asp362 is part of the active site. Residue Asn378 is glycosylated (N-linked (GlcNAc...) asparagine). The active site involves His415.

This sequence belongs to the peptidase S10 family. Ubiquitous.

It localises to the secreted. Its function is as follows. Probable carboxypeptidase. In Arabidopsis thaliana (Mouse-ear cress), this protein is Serine carboxypeptidase-like 7 (SCPL7).